Consider the following 296-residue polypeptide: MRIILITGMSGSGKSVALNVLEDAGYYCVDNLPAQFIPELARYLADQGYTHLGVATDIRSRESLRKVPETITQLRKEHDVRMLFLTASTNALVQRYSETRRRHPLSIRNGRPDAGNPPSAAKGPDTSLIEAIEMERELLSPLADPAHRIDTSTLRTNALRAYIKEFISDEPHDITLMFESFGFKHGVPTDADLVFDVRSLPNPYYDTQLRPLTGRDQPVIDFLQSQPMVLAMAEDIRAYVEKWLPSFIADNRSYLTVAIGCTGGQHRSVYIAERLATYFRAHGNVLVRHRELAVDA.

Residue 8 to 15 (GMSGSGKS) participates in ATP binding. Residue 57 to 60 (DIRS) participates in GTP binding. Positions 99 to 124 (TRRRHPLSIRNGRPDAGNPPSAAKGP) are disordered.

It belongs to the RapZ-like family.

Its function is as follows. Displays ATPase and GTPase activities. The chain is Nucleotide-binding protein RSc0403 from Ralstonia nicotianae (strain ATCC BAA-1114 / GMI1000) (Ralstonia solanacearum).